Reading from the N-terminus, the 118-residue chain is Basic phospholipase A2 PA-11 (118 aa).

7 disulfides stabilise this stretch: cysteine 11–cysteine 71, cysteine 27–cysteine 117, cysteine 29–cysteine 45, cysteine 44–cysteine 98, cysteine 51–cysteine 91, cysteine 60–cysteine 84, and cysteine 78–cysteine 89. Positions 28, 30, and 32 each coordinate Ca(2+). Residue histidine 48 is part of the active site. Aspartate 49 provides a ligand contact to Ca(2+). Aspartate 92 is an active-site residue.

This sequence belongs to the phospholipase A2 family. Group I subfamily. D49 sub-subfamily. Requires Ca(2+) as cofactor. Expressed by the venom gland.

It is found in the secreted. It catalyses the reaction a 1,2-diacyl-sn-glycero-3-phosphocholine + H2O = a 1-acyl-sn-glycero-3-phosphocholine + a fatty acid + H(+). PLA2 catalyzes the calcium-dependent hydrolysis of the 2-acyl groups in 3-sn-phosphoglycerides. The chain is Basic phospholipase A2 PA-11 from Pseudechis australis (Mulga snake).